We begin with the raw amino-acid sequence, 272 residues long: uncharacterized protein (272 aa).

The active-site Schiff-base intermediate with substrate is lysine 185.

This sequence belongs to the DeoC/FbaB aldolase family.

This is an uncharacterized protein from Saccharolobus solfataricus (strain ATCC 35092 / DSM 1617 / JCM 11322 / P2) (Sulfolobus solfataricus).